We begin with the raw amino-acid sequence, 257 residues long: UPF0246 protein ECA3888 (257 aa).

It belongs to the UPF0246 family.

This Pectobacterium atrosepticum (strain SCRI 1043 / ATCC BAA-672) (Erwinia carotovora subsp. atroseptica) protein is UPF0246 protein ECA3888.